The following is a 75-amino-acid chain: High-potential iron-sulfur protein (75 aa).

[4Fe-4S] cluster is bound by residues cysteine 38, cysteine 41, cysteine 54, and cysteine 68.

Homodimer. Monomer at different ionic strengths.

Functionally, specific class of high-redox-potential 4Fe-4S ferredoxins. Functions in anaerobic electron transport in most purple and in some other photosynthetic bacteria and in at least one genus (Paracoccus) of halophilic, denitrifying bacteria. Competent in photosynthetic electron transfer to oxidized cytochrome bc1 complex via the membrane-bound c-type tetraheme. This is High-potential iron-sulfur protein (hip) from Rhodoferax fermentans.